The chain runs to 356 residues: Heat-inducible transcription repressor HrcA (356 aa).

The protein belongs to the HrcA family.

Its function is as follows. Negative regulator of class I heat shock genes (grpE-dnaK-dnaJ and groELS operons). Prevents heat-shock induction of these operons. This is Heat-inducible transcription repressor HrcA from Bartonella quintana (strain Toulouse) (Rochalimaea quintana).